The chain runs to 365 residues: Sulfate/thiosulfate import ATP-binding protein CysA (365 aa).

An ABC transporter domain is found at 3 to 237; sequence IEIANIKKSF…PATRFVLEFM (235 aa). 35–42 serves as a coordination point for ATP; it reads GPSGSGKT.

It belongs to the ABC transporter superfamily. Sulfate/tungstate importer (TC 3.A.1.6) family. As to quaternary structure, the complex is composed of two ATP-binding proteins (CysA), two transmembrane proteins (CysT and CysW) and a solute-binding protein (CysP).

The protein resides in the cell inner membrane. The enzyme catalyses sulfate(out) + ATP + H2O = sulfate(in) + ADP + phosphate + H(+). The catalysed reaction is thiosulfate(out) + ATP + H2O = thiosulfate(in) + ADP + phosphate + H(+). Its function is as follows. Part of the ABC transporter complex CysAWTP involved in sulfate/thiosulfate import. Responsible for energy coupling to the transport system. The polypeptide is Sulfate/thiosulfate import ATP-binding protein CysA (Escherichia coli (strain K12)).